We begin with the raw amino-acid sequence, 500 residues long: Trehalose-6-phosphate synthase (500 aa).

Position 28 (arginine 28) interacts with D-glucose 6-phosphate. Residue 48 to 49 (GG) participates in UDP-alpha-D-glucose binding. 2 residues coordinate D-glucose 6-phosphate: tyrosine 104 and aspartate 158. Positions 300 and 305 each coordinate UDP-alpha-D-glucose. D-glucose 6-phosphate is bound at residue arginine 338. 403–407 (LVAKE) lines the UDP-alpha-D-glucose pocket.

It belongs to the glycosyltransferase 20 family. As to quaternary structure, homotetramer.

The catalysed reaction is ADP-alpha-D-glucose + D-glucose 6-phosphate = alpha,alpha-trehalose 6-phosphate + ADP + H(+). The enzyme catalyses CDP-alpha-D-glucose + D-glucose 6-phosphate = alpha,alpha-trehalose 6-phosphate + CDP + H(+). It carries out the reaction GDP-alpha-D-glucose + D-glucose 6-phosphate = alpha,alpha-trehalose 6-phosphate + GDP + H(+). It catalyses the reaction TDP-alpha-D-glucose + D-glucose 6-phosphate = 5-methyl-UDP + alpha,alpha-trehalose 6-phosphate + H(+). The catalysed reaction is D-glucose 6-phosphate + UDP-alpha-D-glucose = alpha,alpha-trehalose 6-phosphate + UDP + H(+). It functions in the pathway glycan biosynthesis; trehalose biosynthesis. Functionally, probably involved in the osmoprotection via the biosynthesis of trehalose and in the production of glycogen and alpha-glucan via the TreS-Pep2 branch involved in the biosynthesis of maltose-1-phosphate (M1P). Catalyzes the transfer of glucose from UDP-glucose (UDP-Glc) to D-glucose 6-phosphate (Glc-6-P) to form trehalose-6-phosphate. Probably also able to use ADP-Glc, CDP-Glc, GDP-Glc and TDP-Glc as glucosyl donors. This chain is Trehalose-6-phosphate synthase, found in Mycobacterium ulcerans (strain Agy99).